We begin with the raw amino-acid sequence, 194 residues long: Potassium-transporting ATPase KdpC subunit (194 aa).

The chain crosses the membrane as a helical span at residues 12–34; that stretch reads LFLLLLTGGVYPLLTTALGQWWF.

Belongs to the KdpC family. As to quaternary structure, the system is composed of three essential subunits: KdpA, KdpB and KdpC.

The protein localises to the cell inner membrane. Its function is as follows. Part of the high-affinity ATP-driven potassium transport (or Kdp) system, which catalyzes the hydrolysis of ATP coupled with the electrogenic transport of potassium into the cytoplasm. This subunit acts as a catalytic chaperone that increases the ATP-binding affinity of the ATP-hydrolyzing subunit KdpB by the formation of a transient KdpB/KdpC/ATP ternary complex. The sequence is that of Potassium-transporting ATPase KdpC subunit from Salmonella choleraesuis (strain SC-B67).